Consider the following 717-residue polypeptide: Serine/threonine-protein kinase STE11 (717 aa).

The SAM domain maps to 20–84 (NDLPFVQLFL…LRKSKSFQRD (65 aa)). A Phosphoserine modification is found at Ser323. The Protein kinase domain maps to 415-712 (WLKGACIGSG…ALELLQHPWL (298 aa)). ATP contacts are provided by residues 421–429 (IGSGSFGSV) and Lys444. The span at 452–466 (NIGVPTDNNKQANSD) shows a compositional bias: polar residues. A disordered region spans residues 452-481 (NIGVPTDNNKQANSDENNEQEEQQEKIEDV). The residue at position 465 (Ser465) is a Phosphoserine. Asp579 acts as the Proton acceptor in catalysis.

The protein belongs to the protein kinase superfamily. STE Ser/Thr protein kinase family. MAP kinase kinase kinase subfamily. In terms of assembly, homodimer. Interacts (via SAM domain) with STE50 (via SAM domain). Interacts with PBS2 and SHO1.

It catalyses the reaction L-seryl-[protein] + ATP = O-phospho-L-seryl-[protein] + ADP + H(+). The enzyme catalyses L-threonyl-[protein] + ATP = O-phospho-L-threonyl-[protein] + ADP + H(+). Its function is as follows. Serine/threonine protein kinase required for cell-type-specific transcription and signal transduction in yeast. It is thought that it phosphorylates the STE7 protein kinase which itself, phosphorylates the FUS3 and or KSS1 kinases. This is Serine/threonine-protein kinase STE11 (STE11) from Saccharomyces cerevisiae (strain ATCC 204508 / S288c) (Baker's yeast).